Reading from the N-terminus, the 380-residue chain is Set1 complex component swd3 (380 aa).

WD repeat units lie at residues Gly-52–Thr-91, Gly-94–Cys-133, Gly-136–Pro-177, His-179–Val-219, Pro-221–Asp-262, Asn-291–Asp-330, and Ser-335–Glu-374. Ser-379 bears the Phosphoserine mark.

As to quaternary structure, component of the Set1 complex composed of ash2, sdc1, set1, shg1, spp1, swd1, swd2 and swd3.

The protein resides in the nucleus. Functionally, the Set1 complex specifically methylates 'Lys-4' of histone H3. The chain is Set1 complex component swd3 from Schizosaccharomyces pombe (strain 972 / ATCC 24843) (Fission yeast).